Here is a 176-residue protein sequence, read N- to C-terminus: Large ribosomal subunit protein uL6 (176 aa).

Over residues 151–170 the composition is skewed to basic and acidic residues; that stretch reads RPPEPYKGKGVRYADEQVRR. Residues 151–176 form a disordered region; the sequence is RPPEPYKGKGVRYADEQVRRKEAKKK.

It belongs to the universal ribosomal protein uL6 family. In terms of assembly, part of the 50S ribosomal subunit.

In terms of biological role, this protein binds to the 23S rRNA, and is important in its secondary structure. It is located near the subunit interface in the base of the L7/L12 stalk, and near the tRNA binding site of the peptidyltransferase center. This chain is Large ribosomal subunit protein uL6, found in Shewanella pealeana (strain ATCC 700345 / ANG-SQ1).